The chain runs to 417 residues: Gamma-glutamyl phosphate reductase (417 aa).

The protein belongs to the gamma-glutamyl phosphate reductase family.

The protein resides in the cytoplasm. The enzyme catalyses L-glutamate 5-semialdehyde + phosphate + NADP(+) = L-glutamyl 5-phosphate + NADPH + H(+). Its pathway is amino-acid biosynthesis; L-proline biosynthesis; L-glutamate 5-semialdehyde from L-glutamate: step 2/2. Catalyzes the NADPH-dependent reduction of L-glutamate 5-phosphate into L-glutamate 5-semialdehyde and phosphate. The product spontaneously undergoes cyclization to form 1-pyrroline-5-carboxylate. The polypeptide is Gamma-glutamyl phosphate reductase (Bacteroides thetaiotaomicron (strain ATCC 29148 / DSM 2079 / JCM 5827 / CCUG 10774 / NCTC 10582 / VPI-5482 / E50)).